A 61-amino-acid chain; its full sequence is UPF0434 protein Nmul_A1027 (61 aa).

Belongs to the UPF0434 family.

This chain is UPF0434 protein Nmul_A1027, found in Nitrosospira multiformis (strain ATCC 25196 / NCIMB 11849 / C 71).